The sequence spans 77 residues: uncharacterized protein (77 aa).

Residues 56 to 77 form a disordered region; it reads SVIPKQQPPSSAAAISESEFED. Low complexity predominate over residues 65–77; the sequence is SSAAAISESEFED.

This is an uncharacterized protein from Frog virus 3 (isolate Goorha) (FV-3).